The chain runs to 462 residues: ATP synthase subunit beta (462 aa).

151 to 158 contributes to the ATP binding site; sequence GGAGVGKT.

Belongs to the ATPase alpha/beta chains family. As to quaternary structure, F-type ATPases have 2 components, CF(1) - the catalytic core - and CF(0) - the membrane proton channel. CF(1) has five subunits: alpha(3), beta(3), gamma(1), delta(1), epsilon(1). CF(0) has four main subunits: a(1), b(1), b'(1) and c(9-12).

The protein localises to the cell inner membrane. The catalysed reaction is ATP + H2O + 4 H(+)(in) = ADP + phosphate + 5 H(+)(out). Functionally, produces ATP from ADP in the presence of a proton gradient across the membrane. The catalytic sites are hosted primarily by the beta subunits. This chain is ATP synthase subunit beta, found in Chlorobium chlorochromatii (strain CaD3).